A 134-amino-acid polypeptide reads, in one-letter code: uncharacterized protein (134 aa).

The segment at 1–30 is disordered; that stretch reads MGTLQGAALRSRERPSWPQETHGHRERTEE. Residues 10–30 are compositionally biased toward basic and acidic residues; sequence RSRERPSWPQETHGHRERTEE.

This is an uncharacterized protein from Homo sapiens (Human).